A 306-amino-acid polypeptide reads, in one-letter code: Formamidopyrimidine-DNA glycosylase (306 aa).

The active-site Schiff-base intermediate with DNA is Pro-2. The active-site Proton donor is the Glu-3. The active-site Proton donor; for beta-elimination activity is the Lys-58. The DNA site is built by His-114, Arg-136, and Lys-179. The segment at 270 to 306 (SVYDREGEACRTSGCRGTVERIVQAGRSTFYCPHCQK) adopts an FPG-type zinc-finger fold. Residue Arg-296 is the Proton donor; for delta-elimination activity of the active site.

The protein belongs to the FPG family. As to quaternary structure, monomer. Zn(2+) is required as a cofactor.

It catalyses the reaction Hydrolysis of DNA containing ring-opened 7-methylguanine residues, releasing 2,6-diamino-4-hydroxy-5-(N-methyl)formamidopyrimidine.. The enzyme catalyses 2'-deoxyribonucleotide-(2'-deoxyribose 5'-phosphate)-2'-deoxyribonucleotide-DNA = a 3'-end 2'-deoxyribonucleotide-(2,3-dehydro-2,3-deoxyribose 5'-phosphate)-DNA + a 5'-end 5'-phospho-2'-deoxyribonucleoside-DNA + H(+). Functionally, involved in base excision repair of DNA damaged by oxidation or by mutagenic agents. Acts as a DNA glycosylase that recognizes and removes damaged bases. Has a preference for oxidized purines, such as 7,8-dihydro-8-oxoguanine (8-oxoG). Has AP (apurinic/apyrimidinic) lyase activity and introduces nicks in the DNA strand. Cleaves the DNA backbone by beta-delta elimination to generate a single-strand break at the site of the removed base with both 3'- and 5'-phosphates. The protein is Formamidopyrimidine-DNA glycosylase of Sinorhizobium medicae (strain WSM419) (Ensifer medicae).